We begin with the raw amino-acid sequence, 223 residues long: Ribonuclease 3 (223 aa).

An RNase III domain is found at 4–127; that stretch reads YSQLEKRLNY…IIGAVYLEAG (124 aa). Glu-40 provides a ligand contact to Mg(2+). Residue Asp-44 is part of the active site. Residues Asn-113 and Glu-116 each coordinate Mg(2+). The active site involves Glu-116. One can recognise a DRBM domain in the interval 154 to 223; sequence DYKTALQELT…AKIALEALKK (70 aa).

The protein belongs to the ribonuclease III family. As to quaternary structure, homodimer. Mg(2+) serves as cofactor.

It is found in the cytoplasm. It catalyses the reaction Endonucleolytic cleavage to 5'-phosphomonoester.. Its function is as follows. Digests double-stranded RNA. Involved in the processing of primary rRNA transcript to yield the immediate precursors to the large and small rRNAs (23S and 16S). Processes some mRNAs, and tRNAs when they are encoded in the rRNA operon. Processes pre-crRNA and tracrRNA of type II CRISPR loci if present in the organism. The protein is Ribonuclease 3 of Sulfurovum sp. (strain NBC37-1).